The chain runs to 494 residues: Glutamyl-tRNA(Gln) amidotransferase subunit A (494 aa).

Catalysis depends on charge relay system residues K81 and S156. S180 (acyl-ester intermediate) is an active-site residue.

Belongs to the amidase family. GatA subfamily. In terms of assembly, heterotrimer of A, B and C subunits.

The enzyme catalyses L-glutamyl-tRNA(Gln) + L-glutamine + ATP + H2O = L-glutaminyl-tRNA(Gln) + L-glutamate + ADP + phosphate + H(+). Its function is as follows. Allows the formation of correctly charged Gln-tRNA(Gln) through the transamidation of misacylated Glu-tRNA(Gln) in organisms which lack glutaminyl-tRNA synthetase. The reaction takes place in the presence of glutamine and ATP through an activated gamma-phospho-Glu-tRNA(Gln). This Mycolicibacterium gilvum (strain PYR-GCK) (Mycobacterium gilvum (strain PYR-GCK)) protein is Glutamyl-tRNA(Gln) amidotransferase subunit A.